A 162-amino-acid chain; its full sequence is Protein A49 (162 aa).

This sequence belongs to the poxviridae A49 protein family.

This is Protein A49 from Homo sapiens (Human).